A 54-amino-acid polypeptide reads, in one-letter code: Ovomucoid (54 aa).

The Kazal-like domain maps to 4–54 (VDCSEYPKPVCSPEYMPLCGSDSKTYNNKCDFCSAVVESNGTLTLGHFGKC). Intrachain disulfides connect C6–C36, C14–C33, and C22–C54. An N-linked (GlcNAc...) asparagine glycan is attached at N43.

It localises to the secreted. The polypeptide is Ovomucoid (Casuarius casuarius (Southern cassowary)).